A 461-amino-acid chain; its full sequence is MAAKRYTSMAYANADEMTFGVSKYPVKAGLDLEIGAGYTIPEINYAPRPEAGASKEKLIKEYERITTDVMERMVQVGFPAIILETEHVQQMSNNPSWGAEVAHAQKTIMEKYHDEYGIKCALRHTIGDIRENREFLQLRGDKYSVFLEAFEQCAENGADLLSVESMGGKEVFDYAVLRNDIPGLLYSIGCLGSIDMELIWTDISKIAKKTGTISAGDTDCAQANTAMFIGGGLLNKNLAHTIAVIARAISAPRSLVAYEAGAVGPGKDCGYENIIVKAITGMPMTMEGKTSTCAHSDVMGNLVMQCCDCWSNESVEYHGEFGGTTVQCWSETLAYDCALMNTALETKNDKVLRDLMMLSDRYRDPQAYMLAYDNAYRVGQSIVKDGDNIYLRAKNAAIECCNIIEEGAAGKLELSRFETKALADAKAALEALPDDMDKFMDDCLTKYKSEVKVFKPENYGF.

3 residues coordinate Zn(2+): E164, C220, and C269.

The protein belongs to the MtaB family. Heterotetramer, composed of 2 MtaB and 2 MtaC subunits.

It catalyses the reaction Co(I)-[methanol-specific corrinoid protein] + methanol + H(+) = methyl-Co(III)-[methanol-specific corrinoid protein] + H2O. In terms of biological role, methyltransferase involved in methanogenesis in the methanol pathway. Catalyzes the methylation of the MtaC-bound cob(I)amide. The polypeptide is Methanol--corrinoid protein co-methyltransferase (mtaB) (Methanosarcina barkeri (strain Fusaro / DSM 804)).